The primary structure comprises 142 residues: Small ribosomal subunit protein uS12 (142 aa).

The protein belongs to the universal ribosomal protein uS12 family. As to quaternary structure, part of the 30S ribosomal subunit.

In terms of biological role, with S4 and S5 plays an important role in translational accuracy. Located at the interface of the 30S and 50S subunits. The chain is Small ribosomal subunit protein uS12 from Thermoplasma acidophilum (strain ATCC 25905 / DSM 1728 / JCM 9062 / NBRC 15155 / AMRC-C165).